A 207-amino-acid chain; its full sequence is Guanylate kinase (207 aa).

Positions 10 to 187 (GFFIVLSAAS…AVERLQVIYQ (178 aa)) constitute a Guanylate kinase-like domain. 17-24 (AASGTGKT) serves as a coordination point for ATP.

It belongs to the guanylate kinase family.

The protein resides in the cytoplasm. It catalyses the reaction GMP + ATP = GDP + ADP. Its function is as follows. Essential for recycling GMP and indirectly, cGMP. The protein is Guanylate kinase of Syntrophus aciditrophicus (strain SB).